The primary structure comprises 337 residues: UDP-3-O-acylglucosamine N-acyltransferase (337 aa).

His238 functions as the Proton acceptor in the catalytic mechanism.

The protein belongs to the transferase hexapeptide repeat family. LpxD subfamily. As to quaternary structure, homotrimer.

The catalysed reaction is a UDP-3-O-[(3R)-3-hydroxyacyl]-alpha-D-glucosamine + a (3R)-hydroxyacyl-[ACP] = a UDP-2-N,3-O-bis[(3R)-3-hydroxyacyl]-alpha-D-glucosamine + holo-[ACP] + H(+). The protein operates within bacterial outer membrane biogenesis; LPS lipid A biosynthesis. In terms of biological role, catalyzes the N-acylation of UDP-3-O-acylglucosamine using 3-hydroxyacyl-ACP as the acyl donor. Is involved in the biosynthesis of lipid A, a phosphorylated glycolipid that anchors the lipopolysaccharide to the outer membrane of the cell. This chain is UDP-3-O-acylglucosamine N-acyltransferase, found in Xanthomonas campestris pv. campestris (strain 8004).